Reading from the N-terminus, the 157-residue chain is Protein Smg (157 aa).

The protein belongs to the Smg family.

The polypeptide is Protein Smg (Serratia proteamaculans (strain 568)).